Here is a 145-residue protein sequence, read N- to C-terminus: 3-dehydroquinate dehydratase (145 aa).

The Proton acceptor role is filled by Y23. Residues N75, H81, and D88 each coordinate substrate. The active-site Proton donor is H101. Residues 102 to 103 (LS) and R112 contribute to the substrate site.

The protein belongs to the type-II 3-dehydroquinase family. Homododecamer.

It carries out the reaction 3-dehydroquinate = 3-dehydroshikimate + H2O. It functions in the pathway metabolic intermediate biosynthesis; chorismate biosynthesis; chorismate from D-erythrose 4-phosphate and phosphoenolpyruvate: step 3/7. Functionally, catalyzes a trans-dehydration via an enolate intermediate. This chain is 3-dehydroquinate dehydratase, found in Legionella pneumophila (strain Paris).